Here is a 156-residue protein sequence, read N- to C-terminus: Small ribosomal subunit protein uS7 (156 aa).

The protein belongs to the universal ribosomal protein uS7 family. As to quaternary structure, part of the 30S ribosomal subunit. Contacts proteins S9 and S11.

One of the primary rRNA binding proteins, it binds directly to 16S rRNA where it nucleates assembly of the head domain of the 30S subunit. Is located at the subunit interface close to the decoding center, probably blocks exit of the E-site tRNA. The sequence is that of Small ribosomal subunit protein uS7 from Blochmanniella pennsylvanica (strain BPEN).